Here is a 290-residue protein sequence, read N- to C-terminus: 33 kDa chaperonin (290 aa).

2 cysteine pairs are disulfide-bonded: cysteine 236–cysteine 238 and cysteine 269–cysteine 272.

It belongs to the HSP33 family. Post-translationally, under oxidizing conditions two disulfide bonds are formed involving the reactive cysteines. Under reducing conditions zinc is bound to the reactive cysteines and the protein is inactive.

It localises to the cytoplasm. Functionally, redox regulated molecular chaperone. Protects both thermally unfolding and oxidatively damaged proteins from irreversible aggregation. Plays an important role in the bacterial defense system toward oxidative stress. The chain is 33 kDa chaperonin from Acholeplasma laidlawii (strain PG-8A).